We begin with the raw amino-acid sequence, 329 residues long: Synaptonemal complex central element protein 1 (329 aa).

The tract at residues 1–29 (MATRPQPLGMEPEGSADLLHGPEGARGQY) is disordered. Coiled coils occupy residues 54–167 (RIEV…LETL) and 194–294 (KEQL…ILAH). The interval 291–329 (ILAHSTQNEEDSSWRMASPKPVEVHEETAQDQERPSSRT) is disordered. Residues 312-329 (VEVHEETAQDQERPSSRT) are compositionally biased toward basic and acidic residues.

The protein belongs to the SYCE family. In terms of assembly, homodimer. Found in a complex with SYCP1 and SYCE2. Interacts with SYCP1, SYCE2 and SYCE3. Interacts with SIX6OS1. As to expression, meiotic cells (at protein level). Expressed in the ovary and testis.

Its subcellular location is the nucleus. The protein resides in the chromosome. Functionally, major component of the transverse central element of synaptonemal complexes (SCS), formed between homologous chromosomes during meiotic prophase. Requires SYCP1 in order to be incorporated into the central element. May have a role in the synaptonemal complex assembly, stabilization and recombination. The polypeptide is Synaptonemal complex central element protein 1 (Syce1) (Mus musculus (Mouse)).